A 64-amino-acid polypeptide reads, in one-letter code: Large ribosomal subunit protein bL28 (64 aa).

This sequence belongs to the bacterial ribosomal protein bL28 family.

The protein is Large ribosomal subunit protein bL28 of Bifidobacterium adolescentis (strain ATCC 15703 / DSM 20083 / NCTC 11814 / E194a).